The sequence spans 424 residues: 5,5'-dehydrodivanillate O-demethylase oxygenase subunit (424 aa).

The region spanning 27–135 (WHPIGGESEF…VRALGGLLWA (109 aa)) is the Rieske domain. Residues Cys-68, His-70, Cys-87, and His-90 each coordinate [2Fe-2S] cluster. Fe cation-binding residues include His-181, His-186, and Asp-306.

Belongs to the bacterial ring-hydroxylating dioxygenase alpha subunit family. As to quaternary structure, homotrimer. The three-component monooxygenase is composed of an oxygenase (LigXa), a ferredoxin (LigXc) and a ferredoxin reductase (LigXd). [2Fe-2S] cluster is required as a cofactor. Fe cation serves as cofactor.

It catalyses the reaction 5,5'-dehydrodivanillate + NADH + O2 + H(+) = 2,2',3-trihydroxy-3'-methoxy-5,5'-dicarboxybiphenyl + formaldehyde + NAD(+) + H2O. Its function is as follows. Involved in the catabolism of 5,5'-dehydrodivanillate (DDVA), an intermediate in the biodegradation of lignin. Part of a three-component monooxygenase that catalyzes the O-demethylation of DDVA, leading to the formation of 2,2',3-trihydroxy-3'-methoxy-5,5'-dicarboxybiphenyl (OH-DDVA). The protein is 5,5'-dehydrodivanillate O-demethylase oxygenase subunit of Sphingobium sp. (strain NBRC 103272 / SYK-6).